Here is an 801-residue protein sequence, read N- to C-terminus: Ribosome biogenesis protein ERB1 (801 aa).

Disordered regions lie at residues Met-1–Arg-135 and Pro-358–Asp-377. Residues Ser-35–Gly-90 are compositionally biased toward acidic residues. Composition is skewed to basic and acidic residues over residues Glu-91 to Ser-113, Pro-124 to Arg-135, and Pro-362 to Asp-377. 2 WD repeats span residues Gly-451 to Ser-490 and Asn-494 to Ala-534. Residues Gly-546 to Ala-570 are disordered. 5 WD repeats span residues Thr-586 to Pro-628, Lys-631 to Ile-669, Pro-672 to Lys-711, Phe-715 to Glu-755, and Val-771 to Met-801.

It belongs to the WD repeat BOP1/ERB1 family. As to quaternary structure, component of the NOP7 complex, composed of ERB1, NOP7 and YTM1. The complex is held together by ERB1, which interacts with NOP7 via its N-terminal domain and with YTM1 via a high-affinity interaction between the seven-bladed beta-propeller domains of the 2 proteins. The NOP7 complex associates with the 66S pre-ribosome.

The protein resides in the nucleus. The protein localises to the nucleolus. Its subcellular location is the nucleoplasm. In terms of biological role, component of the NOP7 complex, which is required for maturation of the 25S and 5.8S ribosomal RNAs and formation of the 60S ribosome. This is Ribosome biogenesis protein ERB1 from Chaetomium thermophilum (strain DSM 1495 / CBS 144.50 / IMI 039719) (Thermochaetoides thermophila).